A 109-amino-acid polypeptide reads, in one-letter code: Glutaredoxin 4 (109 aa).

One can recognise a Glutaredoxin domain in the interval leucine 4–tyrosine 106. A glutathione-binding site is contributed by lysine 21. Cysteine 29 lines the [2Fe-2S] cluster pocket. Residues arginine 58, phenylalanine 70, and cysteine 83–aspartate 84 contribute to the glutathione site.

It belongs to the glutaredoxin family. Monothiol subfamily. In terms of assembly, homodimer.

The protein resides in the cytoplasm. In terms of biological role, monothiol glutaredoxin involved in the biogenesis of iron-sulfur clusters. In Pasteurella multocida (strain Pm70), this protein is Glutaredoxin 4 (grxD).